We begin with the raw amino-acid sequence, 497 residues long: Putative aldehyde dehydrogenase AldA (497 aa).

Glycine 213–glycine 219 is an NAD(+) binding site. Residues glutamate 257 and cysteine 291 contribute to the active site.

Belongs to the aldehyde dehydrogenase family.

The catalysed reaction is an aldehyde + NAD(+) + H2O = a carboxylate + NADH + 2 H(+). The protein is Putative aldehyde dehydrogenase AldA (aldA) of Staphylococcus haemolyticus (strain JCSC1435).